The sequence spans 222 residues: uncharacterized protein (222 aa).

A disordered region spans residues 142–222 (ARRGGCVHPP…LPDPPSAGHL (81 aa)). Low complexity predominate over residues 160–169 (QSRSISSRRA). Positions 182–196 (PRRRPHRHRTRPQTR) are enriched in basic residues.

This sequence belongs to the Rv1128c/1148c/1588c/1702c/1945/3466 family.

This is an uncharacterized protein from Mycobacterium tuberculosis (strain CDC 1551 / Oshkosh).